A 202-amino-acid chain; its full sequence is Venom allergen 5 (202 aa).

4 disulfides stabilise this stretch: cysteine 4-cysteine 16, cysteine 8-cysteine 101, cysteine 26-cysteine 94, and cysteine 168-cysteine 185. One can recognise an SCP domain in the interval 46–187; sequence KQHNEFRQKV…WHRHYLVCNY (142 aa).

It belongs to the CRISP family. Venom allergen 5-like subfamily. In terms of tissue distribution, expressed by the venom gland.

Its subcellular location is the secreted. This Vespa mandarinia (Asian giant hornet) protein is Venom allergen 5.